Reading from the N-terminus, the 335-residue chain is Tetraacyldisaccharide 4'-kinase (335 aa).

Residue 62 to 69 (NVGGTGKT) coordinates ATP.

It belongs to the LpxK family.

The enzyme catalyses a lipid A disaccharide + ATP = a lipid IVA + ADP + H(+). Its pathway is glycolipid biosynthesis; lipid IV(A) biosynthesis; lipid IV(A) from (3R)-3-hydroxytetradecanoyl-[acyl-carrier-protein] and UDP-N-acetyl-alpha-D-glucosamine: step 6/6. Its function is as follows. Transfers the gamma-phosphate of ATP to the 4'-position of a tetraacyldisaccharide 1-phosphate intermediate (termed DS-1-P) to form tetraacyldisaccharide 1,4'-bis-phosphate (lipid IVA). The sequence is that of Tetraacyldisaccharide 4'-kinase from Methylobacillus flagellatus (strain ATCC 51484 / DSM 6875 / VKM B-1610 / KT).